A 650-amino-acid chain; its full sequence is Acetyl-coenzyme A synthetase (650 aa).

CoA is bound by residues 191–194 (RAGR), T311, and N335. Residues 387 to 389 (GEP), 411 to 416 (DTWWQT), D500, and R515 contribute to the ATP site. S523 is a binding site for CoA. R526 is a binding site for ATP. 3 residues coordinate Mg(2+): V537, H539, and V542. R584 is a CoA binding site. K609 carries the N6-acetyllysine modification.

Belongs to the ATP-dependent AMP-binding enzyme family. Mg(2+) is required as a cofactor. Acetylated. Deacetylation by the SIR2-homolog deacetylase activates the enzyme.

It carries out the reaction acetate + ATP + CoA = acetyl-CoA + AMP + diphosphate. In terms of biological role, catalyzes the conversion of acetate into acetyl-CoA (AcCoA), an essential intermediate at the junction of anabolic and catabolic pathways. AcsA undergoes a two-step reaction. In the first half reaction, AcsA combines acetate with ATP to form acetyl-adenylate (AcAMP) intermediate. In the second half reaction, it can then transfer the acetyl group from AcAMP to the sulfhydryl group of CoA, forming the product AcCoA. The chain is Acetyl-coenzyme A synthetase from Shewanella pealeana (strain ATCC 700345 / ANG-SQ1).